A 627-amino-acid chain; its full sequence is MEAHLADMESSGGPTSSLAGTSRNTHVEDDDVVFIESVQPPICAPAIPNERNFVFASSKHENPPGTDSTISPSWRDLTSQKGNLCETIVIDDEGDTDTNGGEEKNPTDFIEWGPNGNKSSTKNVDFPIASLSRSKTKTAVGPFNPGRIDVTDAFQNGRFAVHHNPDSWISQSASFPRNQKQQGVDSLSPVASLPKQIFQPSNQQPTKPVKVTCANCKKPLQKGQTAYQRKGSAHLFCSTTCLSSFSHKRTRKTRNVMCKKDSPVRTTTIVPPVESSKSLQGFYNASLSPYENCQSLRKEVFTKSRCIICNKLGEVRHEISVNSITHKLCSNNCFNEYRLTNGLIMNCCEQCSKYMPKSTGHSILITGQQKRFCCQNCADEYKEIMEAKSKLLLLQNRKRNAIREENEKRLRESSGTLSGNTGDIPEKKEKSSEIIKVAADCSLDTSSEEQNVNLPCSVAVISDTFKEQLGDKNSEELDMSILPSLDPGSWPRILNMKQREFLVKNNPPQIRNFNFPKDSAGKKFSETYYTRILPNGEKGTRPWLLYSASKDSVFCLYCRLFGEGKNQLRNENGCKDWHHLSHLLSKHDESEMHINNSVKYSKLKSDLENKTNEATEGGEDCVQLLYT.

The interval 1–23 (MEAHLADMESSGGPTSSLAGTSR) is disordered. Residues 12-23 (GGPTSSLAGTSR) are compositionally biased toward polar residues. Residue Lys59 forms a Glycyl lysine isopeptide (Lys-Gly) (interchain with G-Cter in SUMO2) linkage. The segment at 91-123 (DDEGDTDTNGGEEKNPTDFIEWGPNGNKSSTKN) is disordered. Residues Lys137 and Lys195 each participate in a glycyl lysine isopeptide (Lys-Gly) (interchain with G-Cter in SUMO2) cross-link. The MYM-type 1 zinc-finger motif lies at 234–268 (HLFCSTTCLSSFSHKRTRKTRNVMCKKDSPVRTTT). An MYM-type 2; degenerate zinc finger spans residues 280–319 (QGFYNASLSPYENCQSLRKEVFTKSRCIICNKLGEVRHEI). 2 consecutive MYM-type zinc fingers follow at residues 326–354 (HKLC…CSKY) and 370–396 (KRFC…LLQN). The interval 405–429 (ENEKRLRESSGTLSGNTGDIPEKKE) is disordered. Residues Lys408, Lys427, and Lys517 each participate in a glycyl lysine isopeptide (Lys-Gly) (interchain with G-Cter in SUMO2) cross-link.

As to quaternary structure, interacts (via N-terminal 120 amino acid region) with ETV5 (via C-terminal).

Its subcellular location is the nucleus. Functionally, functions as a transcriptional regulator. In Mus musculus (Mouse), this protein is Zinc finger MYM-type protein 5 (Zmym5).